The chain runs to 266 residues: 15-hydroxyprostaglandin dehydrogenase [NAD(+)] (266 aa).

NAD(+) contacts are provided by residues 12-20, 36-37, 63-65, and Asn91; these read GAAQGIGRA, DW, and CDV. 2 residues coordinate substrate: Ser138 and Gln148. The active-site Proton acceptor is the Tyr151. NAD(+) contacts are provided by residues 151-155 and 186-188; these read YCASK and VNT.

The protein belongs to the short-chain dehydrogenases/reductases (SDR) family. As to quaternary structure, homodimer.

The protein resides in the cytoplasm. It carries out the reaction prostaglandin E2 + NAD(+) = 15-oxoprostaglandin E2 + NADH + H(+). It catalyses the reaction (15S)-hydroxy-(5Z,8Z,11Z,13E)-eicosatetraenoate + NAD(+) = 15-oxo-(5Z,8Z,11Z,13E)-eicosatetraenoate + NADH + H(+). The catalysed reaction is (11R)-hydroxy-(5Z,8Z,12E,14Z)-eicosatetraenoate + NAD(+) = 11-oxo-(5Z,8Z,12E,14Z)-eicosatetraenoate + NADH + H(+). The enzyme catalyses lipoxin A4 + NAD(+) = 15-oxo-(5S,6R)-dihydroxy-(7E,9E,11Z,13E)-eicosatetraenoate + NADH + H(+). It carries out the reaction 15-oxo-(5S,6R)-dihydroxy-(7E,9E,11Z)-eicosatrienoate + NADH + H(+) = (5S,6R,15S)-trihydroxy-(7E,9E,11Z)-eicosatrienoate + NAD(+). It catalyses the reaction prostaglandin A1 + NAD(+) = 15-oxo-prostaglandin A1 + NADH + H(+). The catalysed reaction is prostaglandin E1 + NAD(+) = 15-oxoprostaglandin E1 + NADH + H(+). The enzyme catalyses 14-hydroxy-(4Z,7Z,10Z,12E,16Z,19Z)-docosahexaenoate + NAD(+) = 14-oxo-(4Z,7Z,10Z,12E,16Z,19Z)-docosahexaenoate + NADH + H(+). It carries out the reaction resolvin E1 + NAD(+) = 18-oxo-resolvin E1 + NADH + H(+). It catalyses the reaction resolvin D1 + NAD(+) = 8-oxoresolvin D1 + NADH + H(+). The catalysed reaction is resolvin D1 + NAD(+) = 17-oxoresolvin D1 + NADH + H(+). The enzyme catalyses resolvin D2 + NAD(+) = 7-oxoresolvin D2 + NADH + H(+). It carries out the reaction resolvin D2 + NAD(+) = 16-oxoresolvin D2 + NADH + H(+). Its function is as follows. Catalyzes the NAD-dependent dehydrogenation (oxidation) of a broad array of hydroxylated polyunsaturated fatty acids (mainly eicosanoids and docosanoids, including prostaglandins, lipoxins and resolvins), yielding their corresponding keto (oxo) metabolites. Decreases the levels of the pro-proliferative prostaglandins such as prostaglandin E2 (whose activity is increased in cancer because of an increase in the expression of cyclooxygenase 2) and generates oxo-fatty acid products that can profoundly influence cell function by abrogating pro-inflammatory cytokine expression. Converts resolvins E1, D1 and D2 to their oxo products, which represents a mode of resolvin inactivation. Resolvin E1 plays important roles during the resolution phase of acute inflammation, while resolvins D1 and D2 have a unique role in obesity-induced adipose inflammation. The polypeptide is 15-hydroxyprostaglandin dehydrogenase [NAD(+)] (HPGD) (Macaca fascicularis (Crab-eating macaque)).